The primary structure comprises 399 residues: Acetylornithine aminotransferase (399 aa).

Residues 102-103 and Phe-135 contribute to the pyridoxal 5'-phosphate site; that span reads GA. Arg-138 contacts N(2)-acetyl-L-ornithine. 220-223 is a pyridoxal 5'-phosphate binding site; that stretch reads DEIQ. N6-(pyridoxal phosphate)lysine is present on Lys-249. Ser-277 provides a ligand contact to N(2)-acetyl-L-ornithine. Thr-278 serves as a coordination point for pyridoxal 5'-phosphate.

This sequence belongs to the class-III pyridoxal-phosphate-dependent aminotransferase family. ArgD subfamily. As to quaternary structure, homodimer. It depends on pyridoxal 5'-phosphate as a cofactor.

Its subcellular location is the cytoplasm. It carries out the reaction N(2)-acetyl-L-ornithine + 2-oxoglutarate = N-acetyl-L-glutamate 5-semialdehyde + L-glutamate. Its pathway is amino-acid biosynthesis; L-arginine biosynthesis; N(2)-acetyl-L-ornithine from L-glutamate: step 4/4. The chain is Acetylornithine aminotransferase from Oceanobacillus iheyensis (strain DSM 14371 / CIP 107618 / JCM 11309 / KCTC 3954 / HTE831).